Consider the following 337-residue polypeptide: Phosphoribosylformylglycinamidine cyclo-ligase (337 aa).

The protein belongs to the AIR synthase family.

The protein resides in the cytoplasm. The catalysed reaction is 2-formamido-N(1)-(5-O-phospho-beta-D-ribosyl)acetamidine + ATP = 5-amino-1-(5-phospho-beta-D-ribosyl)imidazole + ADP + phosphate + H(+). It functions in the pathway purine metabolism; IMP biosynthesis via de novo pathway; 5-amino-1-(5-phospho-D-ribosyl)imidazole from N(2)-formyl-N(1)-(5-phospho-D-ribosyl)glycinamide: step 2/2. In Pseudothermotoga lettingae (strain ATCC BAA-301 / DSM 14385 / NBRC 107922 / TMO) (Thermotoga lettingae), this protein is Phosphoribosylformylglycinamidine cyclo-ligase.